Consider the following 517-residue polypeptide: Nicotine N-demethylase CYP82E4 (517 aa).

Residues 2–22 (VFPIEAIVGLVTFTFLFFFLW) traverse the membrane as a helical segment. Lysine 254 is covalently cross-linked (Glycyl lysine isopeptide (Lys-Gly) (interchain with G-Cter in ubiquitin)). Position 457 (cysteine 457) interacts with heme.

It belongs to the cytochrome P450 family. CYP82E2 subfamily. It depends on heme as a cofactor. As to expression, expressed at low levels in green leaves.

It localises to the membrane. The enzyme catalyses (S)-nicotine + reduced [NADPH--hemoprotein reductase] + O2 = (S)-nornicotine + formaldehyde + oxidized [NADPH--hemoprotein reductase] + H2O + H(+). It functions in the pathway alkaloid biosynthesis; nicotine biosynthesis. Its function is as follows. Involved in the biosynthesis of pyridine alkaloid natural products, leading mainly to the production of anabasine, anatabine, nicotine and nornicotine, effective deterrents against herbivores with antiparasitic and pesticide properties (neurotoxins); nornicotine serves as the precursor in the synthesis of the carcinogen compound N'-nitrosonornicotine (NNN). Catalyzes the demethylation of nicotine to form nornicotine. The sequence is that of Nicotine N-demethylase CYP82E4 from Nicotiana tabacum (Common tobacco).